Reading from the N-terminus, the 503-residue chain is ATP synthase subunit alpha (503 aa).

169-176 (GDRGTGKT) lines the ATP pocket.

The protein belongs to the ATPase alpha/beta chains family. F-type ATPases have 2 components, CF(1) - the catalytic core - and CF(0) - the membrane proton channel. CF(1) has five subunits: alpha(3), beta(3), gamma(1), delta(1), epsilon(1). CF(0) has three main subunits: a(1), b(2) and c(9-12). The alpha and beta chains form an alternating ring which encloses part of the gamma chain. CF(1) is attached to CF(0) by a central stalk formed by the gamma and epsilon chains, while a peripheral stalk is formed by the delta and b chains.

It is found in the cell inner membrane. It carries out the reaction ATP + H2O + 4 H(+)(in) = ADP + phosphate + 5 H(+)(out). In terms of biological role, produces ATP from ADP in the presence of a proton gradient across the membrane. The alpha chain is a regulatory subunit. This is ATP synthase subunit alpha from Leptospira interrogans serogroup Icterohaemorrhagiae serovar copenhageni (strain Fiocruz L1-130).